Here is a 410-residue protein sequence, read N- to C-terminus: MIREKFERIKPHLNIGTIGHVDHGKTTLTAAITMALAVKGYTKAKNYMDIDSAPEEKARGITINTAHVEYETDVRHYAHVDCPGHADYVKNMITGAAQMDGAILVVSGADGPMPQTKEHILLAKQVGVPAIVVFLNKADQVDDDELLELVELEIQETLTTYEYPGEEIPIITGSAITALESLTAKYVLRIGNKWVQKIYDLMETVDEYIPTPKRDTEKPFLMAIENVVSITGRGTVATGRVERGMIEVGQTVELVGLKNTKEAIITGLEMFHKTLEKSVAGDNVGILLRRIQKEEIQRGMVLAKPSSILPHQHFKAQVYILKKEEGGRHTSFFAGYRPQFYVRTTDVTGHIKTFQGKIDNTQIQMVMPGDRIQMEVELIRPIAIETRMRFAIREGGKTVGAGVVTTIVQA.

The tr-type G domain maps to 10-213 (KPHLNIGTIG…TVDEYIPTPK (204 aa)). The interval 19 to 26 (GHVDHGKT) is G1. 19–26 (GHVDHGKT) lines the GTP pocket. Thr-26 lines the Mg(2+) pocket. The interval 60–64 (GITIN) is G2. Residues 81–84 (DCPG) are G3. Residues 81–85 (DCPGH) and 136–139 (NKAD) contribute to the GTP site. The G4 stretch occupies residues 136–139 (NKAD). The G5 stretch occupies residues 174-176 (SAI).

Belongs to the TRAFAC class translation factor GTPase superfamily. Classic translation factor GTPase family. EF-Tu/EF-1A subfamily.

It is found in the plastid. It localises to the chloroplast. The catalysed reaction is GTP + H2O = GDP + phosphate + H(+). Its function is as follows. GTP hydrolase that promotes the GTP-dependent binding of aminoacyl-tRNA to the A-site of ribosomes during protein biosynthesis. This is Elongation factor Tu, chloroplastic (tufA) from Codium fragile (Dead man's fingers).